Here is a 200-residue protein sequence, read N- to C-terminus: Inducible T-cell costimulator (200 aa).

Positions 1–20 (MKPYFCRVFVFCFLIRLLTG) are cleaved as a signal peptide. The Extracellular portion of the chain corresponds to 21 to 144 (EINGSADHRM…QLCCQLKLWL (124 aa)). N-linked (GlcNAc...) asparagine glycosylation occurs at N23. Positions 30 to 133 (MFSFHNGGVQ…LSGGYLHIYE (104 aa)) constitute an Ig-like V-type domain. Disulfide bonds link C42-C109 and C63-C83. 2 N-linked (GlcNAc...) asparagine glycosylation sites follow: N89 and N123. The chain crosses the membrane as a helical span at residues 145–165 (PVGCAAFVVVLLFGCILIIWF). The Cytoplasmic portion of the chain corresponds to 166 to 200 (SKKKYGSSVHDPNSEYMFMAAVNTNKKSRLAGVTS).

In terms of assembly, homodimer; disulfide-linked. Interacts with ICOSLG. Interacts with PIK3R1. Interacts with TBK1; this interaction is critical for the maturation of T follicular regulatory cells. Post-translationally, N-glycosylated. Expressed on activated T-cells and resting memory T-cells. High expression seen in the thymic medulla and in the germinal centers and T-cell zones of lymph nodes and Peyer patches. Expressed at low levels in the spleen.

It localises to the cell membrane. Stimulatory receptor expressed in activated or antigen-experienced T-cells that plays an important role in the immune response. Upon binding to its ligand ICOSL expressed on antigen presenting cells (APCs), delivers costimulatory signals that enhances all basic T-cell responses to a foreign antigen, namely proliferation, secretion of lymphokines including IL10, up-regulation of molecules that mediate cell-cell interaction, and effective help for antibody secretion by B-cells. Also acts as a costimulatory receptor critical for the differentiation of T follicular regulatory cells upon immune challenges such as viral infection. Mechanistically, potentiates TCR-induced calcium flux by augmenting PLCG1 activation and actin remodeling. In addition, activates PI3K signaling pathways independently of calcium flux. Essential both for efficient interaction between T and B-cells and for normal antibody responses to T-cell dependent antigens. Prevents the apoptosis of pre-activated T-cells. Plays a critical role in CD40-mediated class switching of immunoglobin isotypes. In Mus musculus (Mouse), this protein is Inducible T-cell costimulator (Icos).